The primary structure comprises 492 residues: Fibroblast growth factor receptor substrate 3 (492 aa).

Glycine 2 carries the N-myristoyl glycine lipid modification. The 103-residue stretch at 13–115 (VPHNHPTKFK…QCNSINVTEE (103 aa)) folds into the IRS-type PTB domain. Disordered regions lie at residues 125–205 (PQEL…EDRR), 337–413 (QQLR…EPPR), and 425–492 (WGTA…DLPL). Polar residues-rich tracts occupy residues 133-147 (GSSQ…SFSN) and 166-185 (PSTS…QTLI). A compositionally biased stretch (low complexity) spans 374–385 (TSTRASARSHSS).

In terms of assembly, binds NTRK1, FGFR1, NGFR, GRB2, PTPN11 and ERK2. Phosphorylated on tyrosine residues upon stimulation by BFGF or NGFB.

The protein resides in the membrane. Adapter protein that links FGF and NGF receptors to downstream signaling pathways. Involved in the activation of MAP kinases. Down-regulates ERK2 signaling by interfering with the phosphorylation and nuclear translocation of ERK2. In Rattus norvegicus (Rat), this protein is Fibroblast growth factor receptor substrate 3 (Frs3).